Here is a 142-residue protein sequence, read N- to C-terminus: NADH-quinone oxidoreductase subunit A 2 (142 aa).

A run of 3 helical transmembrane segments spans residues 18–38 (FLPL…LLLA), 73–93 (FYLI…IFAW), and 104–124 (GLVH…WLWL).

It belongs to the complex I subunit 3 family. In terms of assembly, NDH-1 is composed of 14 different subunits. Subunits NuoA, H, J, K, L, M, N constitute the membrane sector of the complex.

It is found in the cell inner membrane. The catalysed reaction is a quinone + NADH + 5 H(+)(in) = a quinol + NAD(+) + 4 H(+)(out). In terms of biological role, NDH-1 shuttles electrons from NADH, via FMN and iron-sulfur (Fe-S) centers, to quinones in the respiratory chain. The immediate electron acceptor for the enzyme in this species is believed to be ubiquinone. Couples the redox reaction to proton translocation (for every two electrons transferred, four hydrogen ions are translocated across the cytoplasmic membrane), and thus conserves the redox energy in a proton gradient. The polypeptide is NADH-quinone oxidoreductase subunit A 2 (Geobacter sulfurreducens (strain ATCC 51573 / DSM 12127 / PCA)).